Here is a 669-residue protein sequence, read N- to C-terminus: DNA ligase (669 aa).

NAD(+)-binding positions include 34 to 38, 83 to 84, and glutamate 114; these read DAEYD and SL. The N6-AMP-lysine intermediate role is filled by lysine 116. The NAD(+) site is built by arginine 137, glutamate 171, lysine 287, and lysine 311. Zn(2+) is bound by residues cysteine 405, cysteine 408, cysteine 423, and cysteine 428. The BRCT domain occupies 591–669; sequence NVESYFAGKT…EERFLQELNK (79 aa).

This sequence belongs to the NAD-dependent DNA ligase family. LigA subfamily. Mg(2+) serves as cofactor. Mn(2+) is required as a cofactor.

The catalysed reaction is NAD(+) + (deoxyribonucleotide)n-3'-hydroxyl + 5'-phospho-(deoxyribonucleotide)m = (deoxyribonucleotide)n+m + AMP + beta-nicotinamide D-nucleotide.. Functionally, DNA ligase that catalyzes the formation of phosphodiester linkages between 5'-phosphoryl and 3'-hydroxyl groups in double-stranded DNA using NAD as a coenzyme and as the energy source for the reaction. It is essential for DNA replication and repair of damaged DNA. The protein is DNA ligase of Bacillus cereus (strain B4264).